The sequence spans 67 residues: DNA-directed RNA polymerase subunit omega (67 aa).

It belongs to the RNA polymerase subunit omega family. As to quaternary structure, the RNAP catalytic core consists of 2 alpha, 1 beta, 1 beta' and 1 omega subunit. When a sigma factor is associated with the core the holoenzyme is formed, which can initiate transcription.

It carries out the reaction RNA(n) + a ribonucleoside 5'-triphosphate = RNA(n+1) + diphosphate. Its function is as follows. Promotes RNA polymerase assembly. Latches the N- and C-terminal regions of the beta' subunit thereby facilitating its interaction with the beta and alpha subunits. The sequence is that of DNA-directed RNA polymerase subunit omega from Bordetella pertussis (strain Tohama I / ATCC BAA-589 / NCTC 13251).